The primary structure comprises 53 residues: UPF0391 membrane protein ECA0470 (53 aa).

The next 2 helical transmembrane spans lie at 4–24 (WGIIFLVIALIAAALGFGGLA) and 30–47 (AAKIVFVVGIILFLVSLF).

The protein belongs to the UPF0391 family.

Its subcellular location is the cell membrane. The polypeptide is UPF0391 membrane protein ECA0470 (Pectobacterium atrosepticum (strain SCRI 1043 / ATCC BAA-672) (Erwinia carotovora subsp. atroseptica)).